The primary structure comprises 119 residues: Protein phosphatase EYA4 (119 aa).

The protein belongs to the HAD-like hydrolase superfamily. EYA family. Requires Mg(2+) as cofactor.

The protein resides in the cytoplasm. The protein localises to the nucleus. The enzyme catalyses O-phospho-L-tyrosyl-[protein] + H2O = L-tyrosyl-[protein] + phosphate. Functionally, tyrosine phosphatase that specifically dephosphorylates 'Tyr-142' of histone H2AX (H2AXY142ph). 'Tyr-142' phosphorylation of histone H2AX plays a central role in DNA repair and acts as a mark that distinguishes between apoptotic and repair responses to genotoxic stress. Promotes efficient DNA repair by dephosphorylating H2AX, promoting the recruitment of DNA repair complexes containing MDC1. Its function as histone phosphatase probably explains its role in transcription regulation during organogenesis. May be involved in development of the eye. This chain is Protein phosphatase EYA4 (eya4), found in Takifugu rubripes (Japanese pufferfish).